Here is a 953-residue protein sequence, read N- to C-terminus: ATP-dependent 6-phosphofructokinase (953 aa).

An N-terminal catalytic PFK domain 1 region spans residues 1 to 558; it reads MIEGISFASF…QLQGFLLTNS (558 aa). Residues G193, 256-257, and 286-289 contribute to the ATP site; these read RC and GDGS. Position 287 (D287) interacts with Mg(2+). Residues 332–334, R369, 376–378, E433, R460, and 466–469 each bind substrate; these read SID, MGR, and HVQR. The Proton acceptor role is filled by D334. Residues 559–572 are interdomain linker; that stretch reads ADKDRPQEPAKDPL. A C-terminal regulatory PFK domain 2 region spans residues 573 to 953; it reads RVAIVCTGAP…AKEQGIIDPC (381 aa). Residues R645, 702-706, R740, 747-749, E807, R833, 839-842, and R906 contribute to the beta-D-fructose 2,6-bisphosphate site; these read TISNN, QGG, and HVQQ.

The protein belongs to the phosphofructokinase type A (PFKA) family. ATP-dependent PFK group I subfamily. Eukaryotic two domain clade 'E' sub-subfamily. In terms of assembly, heterooctamer of 4 alpha and 4 beta chains. Requires Mg(2+) as cofactor.

The protein localises to the cytoplasm. The enzyme catalyses beta-D-fructose 6-phosphate + ATP = beta-D-fructose 1,6-bisphosphate + ADP + H(+). The protein operates within carbohydrate degradation; glycolysis; D-glyceraldehyde 3-phosphate and glycerone phosphate from D-glucose: step 3/4. With respect to regulation, allosterically activated by ADP, AMP, or fructose 2,6-bisphosphate, and allosterically inhibited by ATP or citrate. Catalyzes the phosphorylation of D-fructose 6-phosphate to fructose 1,6-bisphosphate by ATP, the first committing step of glycolysis. The protein is ATP-dependent 6-phosphofructokinase (PFK1) of Yarrowia lipolytica (strain CLIB 122 / E 150) (Yeast).